Here is a 534-residue protein sequence, read N- to C-terminus: CTP synthase (534 aa).

The tract at residues methionine 1–leucine 267 is amidoligase domain. Serine 13 serves as a coordination point for CTP. Serine 13 is a binding site for UTP. Serine 14–isoleucine 19 provides a ligand contact to ATP. Tyrosine 54 serves as a coordination point for L-glutamine. Aspartate 71 contacts ATP. 2 residues coordinate Mg(2+): aspartate 71 and glutamate 141. Residues aspartate 148–glutamate 150, lysine 188–glutamine 193, and lysine 224 contribute to the CTP site. Residues lysine 188–glutamine 193 and lysine 224 each bind UTP. Residues lysine 292–lysine 534 form the Glutamine amidotransferase type-1 domain. Glycine 354 contributes to the L-glutamine binding site. Cysteine 381 functions as the Nucleophile; for glutamine hydrolysis in the catalytic mechanism. L-glutamine-binding positions include leucine 382–glutamine 385, glutamate 405, and arginine 463. Catalysis depends on residues histidine 508 and glutamate 510.

It belongs to the CTP synthase family. Homotetramer.

It catalyses the reaction UTP + L-glutamine + ATP + H2O = CTP + L-glutamate + ADP + phosphate + 2 H(+). The catalysed reaction is L-glutamine + H2O = L-glutamate + NH4(+). The enzyme catalyses UTP + NH4(+) + ATP = CTP + ADP + phosphate + 2 H(+). It functions in the pathway pyrimidine metabolism; CTP biosynthesis via de novo pathway; CTP from UDP: step 2/2. Allosterically activated by GTP, when glutamine is the substrate; GTP has no effect on the reaction when ammonia is the substrate. The allosteric effector GTP functions by stabilizing the protein conformation that binds the tetrahedral intermediate(s) formed during glutamine hydrolysis. Inhibited by the product CTP, via allosteric rather than competitive inhibition. Catalyzes the ATP-dependent amination of UTP to CTP with either L-glutamine or ammonia as the source of nitrogen. Regulates intracellular CTP levels through interactions with the four ribonucleotide triphosphates. The protein is CTP synthase of Streptococcus agalactiae serotype Ia (strain ATCC 27591 / A909 / CDC SS700).